The primary structure comprises 147 residues: Hemoglobin subunit beta (147 aa).

N-acetylvaline is present on V2. The Globin domain maps to 3-147; sequence NLSGDEKNAV…VANALAHRYH (145 aa). Position 45 is a phosphoserine (S45). K60 carries the N6-acetyllysine modification. Position 64 (H64) interacts with heme b. K83 is modified (N6-acetyllysine). H93 lines the heme b pocket. C94 is modified (S-nitrosocysteine).

The protein belongs to the globin family. In terms of assembly, heterotetramer of two alpha chains and two beta chains. As to expression, red blood cells.

In terms of biological role, involved in oxygen transport from the lung to the various peripheral tissues. The protein is Hemoglobin subunit beta (HBB) of Vicugna pacos (Alpaca).